We begin with the raw amino-acid sequence, 249 residues long: Putative NAD(+)--arginine ADP-ribosyltransferase Vis (249 aa).

An N-terminal signal peptide occupies residues 1 to 18; sequence MNTRFLLLLCCLSFTTFS. The region spanning 31 to 223 is the TR mART core domain; it reads EEEVTQLAED…IGVETVKASA (193 aa). NAD(+) contacts are provided by residues 68–80, 117–120, and Glu137; these read SISG…DYLR and RGTW. Arg117 is a catalytic residue. Residues Ser142 and Glu191 contribute to the active site. An NAD(+)-binding site is contributed by Glu191.

Belongs to the Arg-specific ADP-ribosyltransferase family.

It is found in the secreted. The catalysed reaction is L-arginyl-[protein] + NAD(+) = N(omega)-(ADP-D-ribosyl)-L-arginyl-[protein] + nicotinamide + H(+). Functionally, a probable mono(ADP-ribosyl)transferase, it may ADP-ribosylate Arg in target protein(s). Upon expression in yeast cells causes cell death. This Vibrio splendidus (strain 12B01) protein is Putative NAD(+)--arginine ADP-ribosyltransferase Vis.